The sequence spans 482 residues: UDP-N-acetylmuramate--L-alanine ligase (482 aa).

123 to 129 provides a ligand contact to ATP; it reads GTHGKTT.

It belongs to the MurCDEF family.

The protein localises to the cytoplasm. The catalysed reaction is UDP-N-acetyl-alpha-D-muramate + L-alanine + ATP = UDP-N-acetyl-alpha-D-muramoyl-L-alanine + ADP + phosphate + H(+). Its pathway is cell wall biogenesis; peptidoglycan biosynthesis. In terms of biological role, cell wall formation. The sequence is that of UDP-N-acetylmuramate--L-alanine ligase from Pseudomonas putida (strain GB-1).